We begin with the raw amino-acid sequence, 387 residues long: Phosphoglycerate kinase (387 aa).

Substrate is bound by residues 21 to 23 (DLN), R36, 59 to 62 (HLGR), R113, and R146. ATP contacts are provided by residues K197, E314, and 340 to 343 (GGDT).

This sequence belongs to the phosphoglycerate kinase family. In terms of assembly, monomer.

It localises to the cytoplasm. It carries out the reaction (2R)-3-phosphoglycerate + ATP = (2R)-3-phospho-glyceroyl phosphate + ADP. It functions in the pathway carbohydrate degradation; glycolysis; pyruvate from D-glyceraldehyde 3-phosphate: step 2/5. This is Phosphoglycerate kinase from Klebsiella pneumoniae (strain 342).